The following is a 406-amino-acid chain: Heparan sulfate glucosamine 3-O-sulfotransferase 3A1 (406 aa).

Topologically, residues 1-24 (MAPPGPASALSTSAEPLSRSIFRK) are cytoplasmic. The helical; Signal-anchor for type II membrane protein transmembrane segment at 25-43 (FLLMLCSLLTSLYVFYCLA) threads the bilayer. Residues 44–406 (ERCQTLSGPV…MTGHDFGWDG (363 aa)) are Lumenal-facing. Basic residues predominate over residues 92–102 (QLPQWRRRRPP). The interval 92 to 134 (QLPQWRRRRPPAPRDDGEEAAWEEESPGLSGGPGGSGAGSTVA) is disordered. Acidic residues predominate over residues 107 to 117 (DGEEAAWEEES). Residues 120 to 129 (LSGGPGGSGA) are compositionally biased toward gly residues. 162–166 (KGGTR) provides a ligand contact to 3'-phosphoadenylyl sulfate. Residues Arg166, 184–190 (EPHFFDR), and 215–218 (KTPS) contribute to the substrate site. Residues Arg243 and Ser251 each coordinate 3'-phosphoadenylyl sulfate. 255–259 (QTLSK) lines the substrate pocket. N-linked (GlcNAc...) asparagine glycosylation occurs at Asn273. Residue 283 to 284 (WS) coordinates substrate. An N-linked (GlcNAc...) asparagine glycan is attached at Asn344. The cysteines at positions 351 and 363 are disulfide-linked. Residue 367-370 (TKGR) coordinates substrate. 3'-phosphoadenylyl sulfate is bound at residue 368 to 372 (KGRTH).

It belongs to the sulfotransferase 1 family. As to expression, ubiquitous. Most abundant in heart and placenta, followed by liver and kidney.

Its subcellular location is the golgi apparatus membrane. The enzyme catalyses alpha-D-glucosaminyl-[heparan sulfate](n) + 3'-phosphoadenylyl sulfate = 3-sulfo-alpha-D-glucosaminyl-[heparan sulfate](n) + adenosine 3',5'-bisphosphate + H(+). Functionally, sulfotransferase that utilizes 3'-phospho-5'-adenylyl sulfate (PAPS) to catalyze the transfer of a sulfo group to an N-unsubstituted glucosamine linked to a 2-O-sulfo iduronic acid unit on heparan sulfate. Catalyzes the O-sulfation of glucosamine in IdoUA2S-GlcNS and also in IdoUA2S-GlcNH2. The substrate-specific O-sulfation generates an enzyme-modified heparan sulfate which acts as a binding receptor to Herpes simplex virus-1 (HSV-1) and permits its entry. Unlike HS3ST1/3-OST-1, does not convert non-anticoagulant heparan sulfate to anticoagulant heparan sulfate. This is Heparan sulfate glucosamine 3-O-sulfotransferase 3A1 (HS3ST3A1) from Homo sapiens (Human).